Consider the following 177-residue polypeptide: FANCD2 opposite strand protein (177 aa).

The protein is FANCD2 opposite strand protein (FANCD2OS) of Homo sapiens (Human).